The primary structure comprises 475 residues: Siroheme synthase (475 aa).

Positions Met-1–Leu-204 are precorrin-2 dehydrogenase /sirohydrochlorin ferrochelatase. NAD(+) is bound by residues Glu-22–Ile-23 and Pro-43–Ala-44. Ser-129 carries the post-translational modification Phosphoserine. Residues Gly-218 to Pro-475 form a uroporphyrinogen-III C-methyltransferase region. Residue Pro-227 coordinates S-adenosyl-L-methionine. The active-site Proton acceptor is Asp-250. Lys-272 acts as the Proton donor in catalysis. S-adenosyl-L-methionine is bound by residues Gly-303–Asp-305, Ile-308, Thr-333–Ala-334, Met-385, and Gly-414.

It in the N-terminal section; belongs to the precorrin-2 dehydrogenase / sirohydrochlorin ferrochelatase family. This sequence in the C-terminal section; belongs to the precorrin methyltransferase family.

It carries out the reaction uroporphyrinogen III + 2 S-adenosyl-L-methionine = precorrin-2 + 2 S-adenosyl-L-homocysteine + H(+). The enzyme catalyses precorrin-2 + NAD(+) = sirohydrochlorin + NADH + 2 H(+). It catalyses the reaction siroheme + 2 H(+) = sirohydrochlorin + Fe(2+). The protein operates within cofactor biosynthesis; adenosylcobalamin biosynthesis; precorrin-2 from uroporphyrinogen III: step 1/1. It functions in the pathway cofactor biosynthesis; adenosylcobalamin biosynthesis; sirohydrochlorin from precorrin-2: step 1/1. It participates in porphyrin-containing compound metabolism; siroheme biosynthesis; precorrin-2 from uroporphyrinogen III: step 1/1. Its pathway is porphyrin-containing compound metabolism; siroheme biosynthesis; siroheme from sirohydrochlorin: step 1/1. The protein operates within porphyrin-containing compound metabolism; siroheme biosynthesis; sirohydrochlorin from precorrin-2: step 1/1. Multifunctional enzyme that catalyzes the SAM-dependent methylations of uroporphyrinogen III at position C-2 and C-7 to form precorrin-2 via precorrin-1. Then it catalyzes the NAD-dependent ring dehydrogenation of precorrin-2 to yield sirohydrochlorin. Finally, it catalyzes the ferrochelation of sirohydrochlorin to yield siroheme. The polypeptide is Siroheme synthase (Nitrosomonas europaea (strain ATCC 19718 / CIP 103999 / KCTC 2705 / NBRC 14298)).